The chain runs to 106 residues: UPF0145 protein VV2_1464 (106 aa).

The protein belongs to the UPF0145 family.

In Vibrio vulnificus (strain CMCP6), this protein is UPF0145 protein VV2_1464.